The chain runs to 241 residues: Neuroendocrine secretory protein 55 (241 aa).

An N-terminal signal peptide occupies residues 1–46; sequence MDRRSRPQLGRRARHNYNDLCPPIGRRAATALLWLSCSIALLRALA. The disordered stretch occupies residues 71 to 241; that stretch reads AAQVFPEPPE…KRGAIPIRRH (171 aa). A compositionally biased stretch (acidic residues) spans 97–125; it reads EYQEEEFDYESETESESEIESETEFETES. Over residues 167 to 177 the composition is skewed to low complexity; it reads PDASPSRAPPS. Basic and acidic residues predominate over residues 182 to 198; sequence ESPRQGEEPEDKDPRDP. Residues 212 to 221 show a composition bias toward basic residues; the sequence is QHRCKPKKPT.

The protein belongs to the NESP55 family. Post-translationally, binds keratan sulfate chains. May be proteolytically processed to give rise to a number of active peptides. In terms of tissue distribution, highly expressed in adrenal medulla and anterior and posterior pituitary. In the brain, detected in hypothalamus, hippocampus, caudate nucleus, thalamus and, in significantly lower amounts, in the cerebellum.

The protein localises to the cytoplasmic vesicle. It is found in the secretory vesicle. Its subcellular location is the secreted. This Bos taurus (Bovine) protein is Neuroendocrine secretory protein 55.